A 286-amino-acid polypeptide reads, in one-letter code: DegV domain-containing protein M6_Spy1658 (286 aa).

The 280-residue stretch at 3 to 282 folds into the DegV domain; sequence FTIMTDSTAD…PNTLAVFVIG (280 aa). 2 residues coordinate hexadecanoate: Thr-62 and Ser-94.

May bind long-chain fatty acids, such as palmitate, and may play a role in lipid transport or fatty acid metabolism. The protein is DegV domain-containing protein M6_Spy1658 of Streptococcus pyogenes serotype M6 (strain ATCC BAA-946 / MGAS10394).